The following is a 402-amino-acid chain: MLSEKTIEIVKSTVPLLQEKGVEITTRFYEILFSEHPELLNIFNHTNQKKGRQQQALANAVYAAATYIDNLEVIIPVVKQIGHKHRSLGIKAEHYPIVGTCLLRAIKEVAGAPDEVLNAWGEAYGVIADAFISIEAEMYEEAAHKEGGWKDFRNFVVVKKVKESDVITSFYLKPEDGGKVSSFIPGQYVTVQINIEGETYTHNRQYSLSDAPGKEYYRISVKKEKGVDTPDGKVSNYLHDHVKEGDMLPVSAPAGDFVLNMDSTLPVVLISGGVGITPMMSMLNTLIEQDSKRNVCFVHAALNSNTHAMKEHVEALDNEYEQVKAYTCYSAPTEKDLEMKNFDKEGLIEAEWLQTIIPTTEAEFYFCGPVAFMKHINATLTDLGVKQEHIHYEFFGPAASLQ.

The Globin domain occupies 1-136 (MLSEKTIEIV…IADAFISIEA (136 aa)). His85 is a heme b binding site. Residues Tyr95 and Glu135 each act as charge relay system in the active site. A reductase region spans residues 147–402 (GGWKDFRNFV…EFFGPAASLQ (256 aa)). In terms of domain architecture, FAD-binding FR-type spans 150-260 (KDFRNFVVVK…SAPAGDFVLN (111 aa)). Residues Tyr188 and 204–207 (RQYS) contribute to the FAD site. An NADP(+)-binding site is contributed by 273–278 (GVGITP). 394-397 (FFGP) provides a ligand contact to FAD.

The protein belongs to the globin family. Two-domain flavohemoproteins subfamily. It in the C-terminal section; belongs to the flavoprotein pyridine nucleotide cytochrome reductase family. Requires heme b as cofactor. The cofactor is FAD.

The enzyme catalyses 2 nitric oxide + NADPH + 2 O2 = 2 nitrate + NADP(+) + H(+). It catalyses the reaction 2 nitric oxide + NADH + 2 O2 = 2 nitrate + NAD(+) + H(+). Functionally, is involved in NO detoxification in an aerobic process, termed nitric oxide dioxygenase (NOD) reaction that utilizes O(2) and NAD(P)H to convert NO to nitrate, which protects the bacterium from various noxious nitrogen compounds. Therefore, plays a central role in the inducible response to nitrosative stress. The polypeptide is Flavohemoprotein (Bacillus cereus (strain ATCC 10987 / NRS 248)).